Consider the following 384-residue polypeptide: S-adenosylmethionine synthase (384 aa).

Residue H15 coordinates ATP. Position 17 (D17) interacts with Mg(2+). E43 is a binding site for K(+). Positions 56 and 99 each coordinate L-methionine. Residues 99-109 (QSPDINQGVDR) are flexible loop. ATP is bound by residues 164–166 (DAK), 230–231 (RF), D239, 245–246 (RK), A262, and K266. D239 contacts L-methionine. K270 is a binding site for L-methionine.

The protein belongs to the AdoMet synthase family. In terms of assembly, homotetramer; dimer of dimers. Mg(2+) is required as a cofactor. The cofactor is K(+).

The protein localises to the cytoplasm. It carries out the reaction L-methionine + ATP + H2O = S-adenosyl-L-methionine + phosphate + diphosphate. The protein operates within amino-acid biosynthesis; S-adenosyl-L-methionine biosynthesis; S-adenosyl-L-methionine from L-methionine: step 1/1. In terms of biological role, catalyzes the formation of S-adenosylmethionine (AdoMet) from methionine and ATP. The overall synthetic reaction is composed of two sequential steps, AdoMet formation and the subsequent tripolyphosphate hydrolysis which occurs prior to release of AdoMet from the enzyme. The chain is S-adenosylmethionine synthase from Yersinia enterocolitica serotype O:8 / biotype 1B (strain NCTC 13174 / 8081).